Reading from the N-terminus, the 316-residue chain is 4-hydroxy-3-methylbut-2-enyl diphosphate reductase (316 aa).

A [4Fe-4S] cluster-binding site is contributed by Cys12. 2 residues coordinate (2E)-4-hydroxy-3-methylbut-2-enyl diphosphate: His41 and His74. His41 and His74 together coordinate dimethylallyl diphosphate. The isopentenyl diphosphate site is built by His41 and His74. Residue Cys96 coordinates [4Fe-4S] cluster. (2E)-4-hydroxy-3-methylbut-2-enyl diphosphate is bound at residue His124. His124 contributes to the dimethylallyl diphosphate binding site. Residue His124 participates in isopentenyl diphosphate binding. Catalysis depends on Glu126, which acts as the Proton donor. A (2E)-4-hydroxy-3-methylbut-2-enyl diphosphate-binding site is contributed by Thr167. Cys197 contacts [4Fe-4S] cluster. Ser225, Ser226, Asn227, and Ser269 together coordinate (2E)-4-hydroxy-3-methylbut-2-enyl diphosphate. 4 residues coordinate dimethylallyl diphosphate: Ser225, Ser226, Asn227, and Ser269. Isopentenyl diphosphate-binding residues include Ser225, Ser226, Asn227, and Ser269.

Belongs to the IspH family. Homodimer. The cofactor is [4Fe-4S] cluster.

It carries out the reaction isopentenyl diphosphate + 2 oxidized [2Fe-2S]-[ferredoxin] + H2O = (2E)-4-hydroxy-3-methylbut-2-enyl diphosphate + 2 reduced [2Fe-2S]-[ferredoxin] + 2 H(+). The catalysed reaction is dimethylallyl diphosphate + 2 oxidized [2Fe-2S]-[ferredoxin] + H2O = (2E)-4-hydroxy-3-methylbut-2-enyl diphosphate + 2 reduced [2Fe-2S]-[ferredoxin] + 2 H(+). It participates in isoprenoid biosynthesis; dimethylallyl diphosphate biosynthesis; dimethylallyl diphosphate from (2E)-4-hydroxy-3-methylbutenyl diphosphate: step 1/1. The protein operates within isoprenoid biosynthesis; isopentenyl diphosphate biosynthesis via DXP pathway; isopentenyl diphosphate from 1-deoxy-D-xylulose 5-phosphate: step 6/6. Functionally, catalyzes the conversion of 1-hydroxy-2-methyl-2-(E)-butenyl 4-diphosphate (HMBPP) into a mixture of isopentenyl diphosphate (IPP) and dimethylallyl diphosphate (DMAPP). Acts in the terminal step of the DOXP/MEP pathway for isoprenoid precursor biosynthesis. The polypeptide is 4-hydroxy-3-methylbut-2-enyl diphosphate reductase (Pectobacterium carotovorum subsp. carotovorum (strain PC1)).